We begin with the raw amino-acid sequence, 311 residues long: Pyrimidine-specific ribonucleoside hydrolase RihA (311 aa).

His240 is an active-site residue.

This sequence belongs to the IUNH family. RihA subfamily.

Hydrolyzes with equal efficiency cytidine or uridine to ribose and cytosine or uracil, respectively. The chain is Pyrimidine-specific ribonucleoside hydrolase RihA from Escherichia coli O9:H4 (strain HS).